A 194-amino-acid chain; its full sequence is Cytochrome c oxidase assembly protein CtaG (194 aa).

Over 1–12 (MALRGPAKTVAQ) the chain is Cytoplasmic. The chain crosses the membrane as a helical; Signal-anchor for type II membrane protein span at residues 13–35 (TVSVVIFMGALAWASVPLYDWFC). Residues 36–194 (RVTGFGGVTG…IEENSDTSLN (159 aa)) lie on the Periplasmic side of the membrane.

The protein belongs to the COX11/CtaG family.

Its subcellular location is the cell inner membrane. In terms of biological role, exerts its effect at some terminal stage of cytochrome c oxidase synthesis, probably by being involved in the insertion of the copper B into subunit I. This chain is Cytochrome c oxidase assembly protein CtaG, found in Roseobacter denitrificans (strain ATCC 33942 / OCh 114) (Erythrobacter sp. (strain OCh 114)).